A 348-amino-acid chain; its full sequence is Putative [LysW]-L-2-aminoadipate/[LysW]-L-glutamate phosphate reductase (348 aa).

9–12 is an NADP(+) binding site; sequence SGYV. Residue cysteine 149 is part of the active site. Position 315 (asparagine 315) interacts with NADP(+).

This sequence belongs to the NAGSA dehydrogenase family. Type 1 subfamily. LysY sub-subfamily.

It is found in the cytoplasm. It carries out the reaction [amino-group carrier protein]-C-terminal-N-(1-carboxy-5-oxopentan-1-yl)-L-glutamine + phosphate + NADP(+) = [amino-group carrier protein]-C-terminal-N-(1-carboxy-5-phosphooxy-5-oxopentan-1-yl)-L-glutamine + NADPH + H(+). The catalysed reaction is [amino-group carrier protein]-C-terminal-gamma-(L-glutamyl-5-semialdehyde)-L-glutamate + phosphate + NADP(+) = [amino-group carrier protein]-C-terminal-gamma-(5-phospho-L-glutamyl)-L-glutamate + NADPH + H(+). It functions in the pathway amino-acid biosynthesis; L-lysine biosynthesis via AAA pathway; L-lysine from L-alpha-aminoadipate (Thermus route): step 3/5. The protein operates within amino-acid biosynthesis; L-arginine biosynthesis. Involved in both the arginine and lysine biosynthetic pathways. The chain is Putative [LysW]-L-2-aminoadipate/[LysW]-L-glutamate phosphate reductase from Cenarchaeum symbiosum (strain A).